A 2883-amino-acid chain; its full sequence is Bifunctional DNA-directed RNA polymerase subunit beta-beta' (2883 aa).

Residues methionine 1–glutamate 1377 form a DNA-directed RNA polymerase subunit beta region. The DNA-directed RNA polymerase subunit beta' stretch occupies residues proline 1382 to alanine 2883. Residues cysteine 1447, cysteine 1449, cysteine 1462, and cysteine 1465 each coordinate Zn(2+). Mg(2+) is bound by residues aspartate 1846, aspartate 1848, and aspartate 1850. 4 residues coordinate Zn(2+): cysteine 2176, cysteine 2250, cysteine 2257, and cysteine 2260.

The protein in the N-terminal section; belongs to the RNA polymerase beta chain family. This sequence in the C-terminal section; belongs to the RNA polymerase beta' chain family. In terms of assembly, the RNAP catalytic core consists of 2 alpha, 1 beta/beta' and 1 omega subunit. When a sigma factor is associated with the core the holoenzyme is formed, which can initiate transcription. The cofactor is Mg(2+). Zn(2+) serves as cofactor.

The catalysed reaction is RNA(n) + a ribonucleoside 5'-triphosphate = RNA(n+1) + diphosphate. DNA-dependent RNA polymerase catalyzes the transcription of DNA into RNA using the four ribonucleoside triphosphates as substrates. This is Bifunctional DNA-directed RNA polymerase subunit beta-beta' (rpoBC) from Wolinella succinogenes (strain ATCC 29543 / DSM 1740 / CCUG 13145 / JCM 31913 / LMG 7466 / NCTC 11488 / FDC 602W) (Vibrio succinogenes).